The sequence spans 342 residues: MKRVFLWLIFVLAFHKLLAEKIGDIASVVGVRDNQLIGYGLVIGLNGTGDKSGSKFTMQSISNMLESVNVKISADDIKSKNVAAVMITASLPPFARQGDKIDIHISSIGDAKSIQGGTLVMTPLNAVDGNIYALAQGAITSGNSNNLLSANIINGATIEREVSYDLFHKNAMTLSLKNPNFKNAIQVQNTLNKVFGNKVAIALDPKTIQITRPERFSMVEFLALVQEIPINYSAKNKIIVDEKSGTIVSGVDIIVHPIVVTSQDITLKITKEPLNDSKNTQDLDNNMSLDTAHNTLSSNGKNITIAGVVKALQKIGVSAKGMVSILQALKKSGAISAEMEIL.

A signal peptide spans 1–19 (MKRVFLWLIFVLAFHKLLA).

This sequence belongs to the FlgI family. The basal body constitutes a major portion of the flagellar organelle and consists of four rings (L,P,S, and M) mounted on a central rod.

The protein resides in the periplasm. The protein localises to the bacterial flagellum basal body. Its function is as follows. Assembles around the rod to form the L-ring and probably protects the motor/basal body from shearing forces during rotation. This chain is Flagellar P-ring protein, found in Helicobacter pylori (strain G27).